A 177-amino-acid polypeptide reads, in one-letter code: Large ribosomal subunit protein uL6 (177 aa).

It belongs to the universal ribosomal protein uL6 family. In terms of assembly, part of the 50S ribosomal subunit.

Functionally, this protein binds to the 23S rRNA, and is important in its secondary structure. It is located near the subunit interface in the base of the L7/L12 stalk, and near the tRNA binding site of the peptidyltransferase center. This chain is Large ribosomal subunit protein uL6, found in Cupriavidus pinatubonensis (strain JMP 134 / LMG 1197) (Cupriavidus necator (strain JMP 134)).